Reading from the N-terminus, the 127-residue chain is MIFSVKSPILGFEHIKTMELIELDKFFVKLASKDDETSFTMINPFALRSYEFDIPSYYEELMDIKESSQLRIYNIIVVALPLEKSTVNFVAPIVCNMDNMTLSQVVLDVTKYPQYGQAEMIENFIQK.

The protein belongs to the FliW family. Interacts with translational regulator CsrA and flagellin(s).

The protein localises to the cytoplasm. In terms of biological role, acts as an anti-CsrA protein, binds CsrA and prevents it from repressing translation of its target genes, one of which is flagellin. Binds to flagellin and participates in the assembly of the flagellum. In Campylobacter concisus (strain 13826), this protein is Flagellar assembly factor FliW.